We begin with the raw amino-acid sequence, 236 residues long: Small ribosomal subunit protein uS3 (236 aa).

The region spanning 38–106 (LRRYLHTRLK…DIQINISEIK (69 aa)) is the KH type-2 domain. The interval 211–236 (DLSPNVQAQQRKMKESPQQRRQRRGG) is disordered.

This sequence belongs to the universal ribosomal protein uS3 family. Part of the 30S ribosomal subunit. Forms a tight complex with proteins S10 and S14.

Functionally, binds the lower part of the 30S subunit head. Binds mRNA in the 70S ribosome, positioning it for translation. In Salinibacter ruber (strain DSM 13855 / M31), this protein is Small ribosomal subunit protein uS3.